A 109-amino-acid polypeptide reads, in one-letter code: Iron-sulfur cluster assembly protein CyaY (109 aa).

The protein belongs to the frataxin family.

Involved in iron-sulfur (Fe-S) cluster assembly. May act as a regulator of Fe-S biogenesis. The polypeptide is Iron-sulfur cluster assembly protein CyaY (Verminephrobacter eiseniae (strain EF01-2)).